The following is a 165-amino-acid chain: Myosin regulatory light chain 2A, cardiac muscle isoform (165 aa).

The residue at position 2 (alanine 2) is a N,N,N-trimethylalanine. EF-hand domains lie at 24–59 (AQIQEFKEAFTIMDQNRDGFIDKADLRDTFAALGRL), 94–128 (DPEETILNAFKVFDPEGKGLKSAYIKEMLMTQEGR), and 129–164 (FSQEEIDQMFAAFPPDVSGNLDYKNLVHVITHGEEK). The Ca(2+) site is built by aspartate 37, asparagine 39, aspartate 41, and aspartate 48.

Myosin is a hexamer of 2 heavy chains and 4 light chains. The N-terminus is blocked. N,N,N-trimethylalanine, found in other myosin light chains would not have been detected in the N-terminal tryptic peptide in PubMed:7319048 because it would remain trimethylated and ninhydrin negative after hydrolysis.

This chain is Myosin regulatory light chain 2A, cardiac muscle isoform, found in Gallus gallus (Chicken).